A 197-amino-acid polypeptide reads, in one-letter code: Imidazoleglycerol-phosphate dehydratase (197 aa).

It belongs to the imidazoleglycerol-phosphate dehydratase family.

It is found in the cytoplasm. It carries out the reaction D-erythro-1-(imidazol-4-yl)glycerol 3-phosphate = 3-(imidazol-4-yl)-2-oxopropyl phosphate + H2O. It functions in the pathway amino-acid biosynthesis; L-histidine biosynthesis; L-histidine from 5-phospho-alpha-D-ribose 1-diphosphate: step 6/9. The polypeptide is Imidazoleglycerol-phosphate dehydratase (Bradyrhizobium diazoefficiens (strain JCM 10833 / BCRC 13528 / IAM 13628 / NBRC 14792 / USDA 110)).